The chain runs to 297 residues: Aspartate carbamoyltransferase catalytic subunit (297 aa).

Carbamoyl phosphate contacts are provided by R49 and T50. K77 contacts L-aspartate. R99, H129, and Q132 together coordinate carbamoyl phosphate. Positions 162 and 215 each coordinate L-aspartate. Carbamoyl phosphate is bound by residues G256 and P257.

This sequence belongs to the aspartate/ornithine carbamoyltransferase superfamily. ATCase family. Heterododecamer (2C3:3R2) of six catalytic PyrB chains organized as two trimers (C3), and six regulatory PyrI chains organized as three dimers (R2).

The catalysed reaction is carbamoyl phosphate + L-aspartate = N-carbamoyl-L-aspartate + phosphate + H(+). It participates in pyrimidine metabolism; UMP biosynthesis via de novo pathway; (S)-dihydroorotate from bicarbonate: step 2/3. Its function is as follows. Catalyzes the condensation of carbamoyl phosphate and aspartate to form carbamoyl aspartate and inorganic phosphate, the committed step in the de novo pyrimidine nucleotide biosynthesis pathway. The chain is Aspartate carbamoyltransferase catalytic subunit from Legionella pneumophila (strain Paris).